The primary structure comprises 416 residues: S-adenosylmethionine synthase (416 aa).

H14 is a binding site for ATP. Residue D16 coordinates Mg(2+). Residue E42 coordinates K(+). The L-methionine site is built by E55 and Q98. Residues 98-108 (QSADINQGVDR) are flexible loop. Residues 164-166 (DAK), 240-241 (KF), D249, 255-256 (RK), A272, and K276 contribute to the ATP site. An L-methionine-binding site is contributed by D249. An L-methionine-binding site is contributed by K280.

Belongs to the AdoMet synthase family. In terms of assembly, homotetramer; dimer of dimers. Mg(2+) serves as cofactor. K(+) is required as a cofactor.

The protein resides in the cytoplasm. The enzyme catalyses L-methionine + ATP + H2O = S-adenosyl-L-methionine + phosphate + diphosphate. The protein operates within amino-acid biosynthesis; S-adenosyl-L-methionine biosynthesis; S-adenosyl-L-methionine from L-methionine: step 1/1. Functionally, catalyzes the formation of S-adenosylmethionine (AdoMet) from methionine and ATP. The overall synthetic reaction is composed of two sequential steps, AdoMet formation and the subsequent tripolyphosphate hydrolysis which occurs prior to release of AdoMet from the enzyme. The protein is S-adenosylmethionine synthase of Flavobacterium johnsoniae (strain ATCC 17061 / DSM 2064 / JCM 8514 / BCRC 14874 / CCUG 350202 / NBRC 14942 / NCIMB 11054 / UW101) (Cytophaga johnsonae).